The chain runs to 359 residues: Protein mab-21-like 2 (359 aa).

The protein belongs to the mab-21 family.

It is found in the nucleus. The protein localises to the cytoplasm. Required for eye morphogenesis. May promote the survival of proliferating retinal progenitor cells. This Danio rerio (Zebrafish) protein is Protein mab-21-like 2 (mab21l2).